Reading from the N-terminus, the 760-residue chain is General transcription and DNA repair factor IIH helicase subunit XPD (760 aa).

The Helicase ATP-binding domain maps to 7-283 (GLLVYFPYDY…KETDEQRLRD (277 aa)). 42–49 (MPSGTGKT) serves as a coordination point for ATP. Positions 116, 134, 155, and 190 each coordinate [4Fe-4S] cluster. The DEAH box signature appears at 234–237 (DEAH). Residues 438 to 637 (MDASLAIKPV…TQSRILKARL (200 aa)) form a mediates interaction with MMS19 region. Residues 682–695 (KRFARGDKRGKLPR) carry the Nuclear localization signal motif.

This sequence belongs to the helicase family. RAD3/XPD subfamily. As to quaternary structure, component of the 7-subunit TFIIH core complex composed of XPB/ERCC3, XPD/ERCC2, GTF2H1, GTF2H2, GTF2H3, GTF2H4 and GTF2H5, which is active in NER. The core complex associates with the 3-subunit CDK-activating kinase (CAK) module composed of CCNH/cyclin H, CDK7 and MNAT1 to form the 10-subunit holoenzyme (holo-TFIIH) active in transcription. Interacts with GTF2H2 (p44) which stimulates the 5'-3' helicase activity of this subunit. Component of the MMXD complex, which includes CIAO1, ERCC2, CIAO2B, MMS19 and SLC25A5. Interacts with CIAO1 and CIAO2B; the interaction WITH CIAO2B is direct. Interacts with ATF7IP. Interacts directly with MMS19. Part of TBP-based Pol II pre-initiation complex (PIC), in which Pol II core assembles with general transcription factors and other specific initiation factors including GTF2E1, GTF2E2, GTF2F1, GTF2F2, TCEA1, ERCC2, ERCC3, GTF2H2, GTF2H3, GTF2H4, GTF2H5, GTF2A1, GTF2A2, GTF2B and TBP; this large multi-subunit PIC complex mediates DNA unwinding and targets Pol II core to the transcription start site where the first phosphodiester bond forms. In terms of assembly, (Microbial infection) Interacts with Epstein-Barr virus EBNA2. Mg(2+) is required as a cofactor. It depends on [4Fe-4S] cluster as a cofactor. Post-translationally, ISGylated.

It is found in the nucleus. Its subcellular location is the cytoplasm. The protein localises to the cytoskeleton. It localises to the spindle. It catalyses the reaction Couples ATP hydrolysis with the unwinding of duplex DNA at the replication fork by translocating in the 5'-3' direction. This creates two antiparallel DNA single strands (ssDNA). The leading ssDNA polymer is the template for DNA polymerase III holoenzyme which synthesizes a continuous strand.. It carries out the reaction ATP + H2O = ADP + phosphate + H(+). With respect to regulation, interaction with GTF2H2 (p44) results in stimulation of the 5'-3' helicase activity of this subunit. DNA unwinding by this subunit in TFIIH is stimulated 4-fold by XPA and 20-fold by ERCC5/XPG. ATP-dependent 5'-3' DNA helicase. Component of the general transcription and DNA repair factor IIH (TFIIH) core complex, not absolutely essential for minimal transcription in vitro. Required for transcription-coupled nucleotide excision repair (NER) of damaged DNA; recognizes damaged bases. Sequestered in chromatin on UV-damaged DNA. When complexed to CDK-activating kinase (CAK), involved in transcription by RNA polymerase II. In NER, TFIIH acts by opening DNA around the lesion to allow the excision of the damaged oligonucleotide and its replacement by a new DNA fragment. The ATP-dependent helicase activity of XPD/ERCC2 is required for DNA opening. Involved in DNA lesion verification. In transcription, TFIIH has an essential role in transcription initiation. When the pre-initiation complex (PIC) has been established, TFIIH is required for promoter opening and promoter escape. Phosphorylation of the C-terminal tail (CTD) of the largest subunit of RNA polymerase II by the kinase module CAK controls the initiation of transcription. XPD/ERCC2 acts by forming a bridge between CAK and the core-TFIIH complex. The structure of the TFIIH transcription complex differs from the NER-TFIIH complex; large movements by XPD/ERCC2 and XPB/ERCC3 are stabilized by XPA which allow this subunit to contact ssDNA. Involved in the regulation of vitamin-D receptor activity. As part of the mitotic spindle-associated MMXD complex it plays a role in chromosome segregation. Might have a role in aging process and could play a causative role in the generation of skin cancers. The protein is General transcription and DNA repair factor IIH helicase subunit XPD (ERCC2) of Homo sapiens (Human).